Consider the following 669-residue polypeptide: UvrABC system protein B (669 aa).

The region spanning 27–414 (ESLQGEHKFQ…EARVIEQVIR (388 aa)) is the Helicase ATP-binding domain. 40 to 47 (GATGTGKT) contacts ATP. The short motif at 93–116 (YYDYYQPEAYIPVTDTYIEKTASI) is the Beta-hairpin element. Residues 431 to 597 (QVDDLYGEIQ…PINKRANNAI (167 aa)) form the Helicase C-terminal domain. A UVR domain is found at 628-663 (PDLIQQLEEKMQEAAKKQEFEVAAIYRDRIQHLRDR).

It belongs to the UvrB family. In terms of assembly, forms a heterotetramer with UvrA during the search for lesions. Interacts with UvrC in an incision complex.

It localises to the cytoplasm. The UvrABC repair system catalyzes the recognition and processing of DNA lesions. A damage recognition complex composed of 2 UvrA and 2 UvrB subunits scans DNA for abnormalities. Upon binding of the UvrA(2)B(2) complex to a putative damaged site, the DNA wraps around one UvrB monomer. DNA wrap is dependent on ATP binding by UvrB and probably causes local melting of the DNA helix, facilitating insertion of UvrB beta-hairpin between the DNA strands. Then UvrB probes one DNA strand for the presence of a lesion. If a lesion is found the UvrA subunits dissociate and the UvrB-DNA preincision complex is formed. This complex is subsequently bound by UvrC and the second UvrB is released. If no lesion is found, the DNA wraps around the other UvrB subunit that will check the other stand for damage. The protein is UvrABC system protein B of Synechocystis sp. (strain ATCC 27184 / PCC 6803 / Kazusa).